The following is a 102-amino-acid chain: NADH-quinone oxidoreductase subunit K (102 aa).

Helical transmembrane passes span 2-22 (LDFY…GVIL), 26-46 (IFTI…IFAT), and 58-78 (VIVM…LALI).

It belongs to the complex I subunit 4L family. NDH-1 is composed of 14 different subunits. Subunits NuoA, H, J, K, L, M, N constitute the membrane sector of the complex.

The protein resides in the cell inner membrane. It catalyses the reaction a quinone + NADH + 5 H(+)(in) = a quinol + NAD(+) + 4 H(+)(out). Its function is as follows. NDH-1 shuttles electrons from NADH, via FMN and iron-sulfur (Fe-S) centers, to quinones in the respiratory chain. The immediate electron acceptor for the enzyme in this species is believed to be ubiquinone. Couples the redox reaction to proton translocation (for every two electrons transferred, four hydrogen ions are translocated across the cytoplasmic membrane), and thus conserves the redox energy in a proton gradient. This chain is NADH-quinone oxidoreductase subunit K, found in Campylobacter fetus subsp. fetus (strain 82-40).